Consider the following 943-residue polypeptide: Calcium-activated chloride channel regulator 2 (943 aa).

The N-terminal stretch at 1–31 (MTQRSIAGPICNLKFVTLLVALSSELPFLGA) is a signal peptide. Residues 32 to 901 (GVQLQDNGYN…SDPVPARDYL (870 aa)) lie on the Extracellular side of the membrane. A metalloprotease domain region spans residues 54–205 (NQNLISNIKE…CSSDITGIFV (152 aa)). N-linked (GlcNAc...) asparagine glycans are attached at residues Asn74 and Asn150. His164 contributes to the Zn(2+) binding site. The active site involves Glu165. 2 residues coordinate Zn(2+): His168 and Asp175. Asn231 carries an N-linked (GlcNAc...) asparagine glycan. The region spanning 311 to 483 (VVCLVLDVSS…NSMIDAFSRI (173 aa)) is the VWFA domain. N-linked (GlcNAc...) asparagine glycosylation is found at Asn522 and Asn822. Residues 902-922 (ILKGVLTAMGLIGIICLIIVV) traverse the membrane as a helical segment. Topologically, residues 923-943 (THHTLSRKKRADKKENGTKLL) are cytoplasmic.

This sequence belongs to the CLCR family. Post-translationally, the 141 kDa mature form is autoproteolytically cleaved by the metalloprotease domain, producing a 109 kDa form and a 35 kDa form. The cleavage is necessary for calcium-activated chloride channel (CaCC) activation activity. N-glycosylated. In terms of tissue distribution, expressed in cornea, skin, vagina, esophagus, and larynx (at protein level). Expressed in trachea and mammary gland. Weakly expressed in testis and kidney. Highly expressed in corneal epithelium, colon and trachea. Moderately expressed in brain, urogenital organs, bladder, uterus and prostate. Highly expressed in tissues containing stratified epithelium including cornea, esophagus, larynx, skin and vagina than those tissues which contain only epithelial monolayers. Expressed in normal breast epithelium but not in breast cancer. Highly expressed during epithelial stratification. Expressed in endothelial cells of lung. Expressed selectively in endothelia of small pulmonary arteries, arterioles, and subpleural and interlobular venules.

It is found in the cell membrane. The protein localises to the basal cell membrane. The protein resides in the cell junction. Its subcellular location is the secreted. In terms of biological role, plays a role in modulating chloride current across the plasma membrane in a calcium-dependent manner, and cell adhesion. Involved in basal cell adhesion and/or stratification of squamous epithelia. May act as a tumor suppressor in breast and colorectal cancer. Plays a key role for cell adhesion in the beginning stages of lung metastasis via the binding to ITGB4. The chain is Calcium-activated chloride channel regulator 2 (CLCA2) from Homo sapiens (Human).